Reading from the N-terminus, the 175-residue chain is Putative transmembrane protein ORF175 (175 aa).

4 helical membrane passes run 14 to 34 (LGIV…GSFM), 58 to 78 (VLSN…AIAF), 101 to 121 (IVVA…FALF), and 142 to 162 (ITPF…VLSI).

It localises to the host membrane. The sequence is that of Putative transmembrane protein ORF175 from Acidianus two-tailed virus (ATV).